Consider the following 51-residue polypeptide: MRFQLRKCSKCFQYTLKEICPKCKEQTISAHPAKFSPDDKYMRYRLAERYN.

The protein belongs to the NOP10 family.

Functionally, involved in ribosome biogenesis; more specifically in 18S rRNA pseudouridylation and in cleavage of pre-rRNA. This is Ribosome biogenesis protein Nop10 from Nitrosopumilus maritimus (strain SCM1).